Reading from the N-terminus, the 255-residue chain is Triosephosphate isomerase (255 aa).

Residue 10–12 participates in substrate binding; sequence NWK. The active-site Electrophile is His96. The Proton acceptor role is filled by Glu168. Residues Gly174, Ser213, and 234–235 each bind substrate; that span reads GG.

This sequence belongs to the triosephosphate isomerase family. Homodimer.

It is found in the cytoplasm. It carries out the reaction D-glyceraldehyde 3-phosphate = dihydroxyacetone phosphate. The protein operates within carbohydrate biosynthesis; gluconeogenesis. Its pathway is carbohydrate degradation; glycolysis; D-glyceraldehyde 3-phosphate from glycerone phosphate: step 1/1. In terms of biological role, involved in the gluconeogenesis. Catalyzes stereospecifically the conversion of dihydroxyacetone phosphate (DHAP) to D-glyceraldehyde-3-phosphate (G3P). This Histophilus somni (strain 129Pt) (Haemophilus somnus) protein is Triosephosphate isomerase.